The following is a 391-amino-acid chain: Mannose-6-phosphate isomerase (391 aa).

The Zn(2+) site is built by Gln-97, His-99, Glu-134, and His-255. Arg-274 is an active-site residue. The residue at position 280 (Lys-280) is an N6-acetyllysine.

The protein belongs to the mannose-6-phosphate isomerase type 1 family. The cofactor is Zn(2+).

The protein resides in the cytoplasm. It catalyses the reaction D-mannose 6-phosphate = D-fructose 6-phosphate. Involved in the conversion of glucose to GDP-L-fucose, which can be converted to L-fucose, a capsular polysaccharide. The protein is Mannose-6-phosphate isomerase (manA) of Escherichia coli (strain K12).